A 510-amino-acid polypeptide reads, in one-letter code: ATP synthase subunit alpha, mitochondrial (510 aa).

171–178 (GDRQTGKT) is a binding site for ATP.

It belongs to the ATPase alpha/beta chains family. F-type ATPases have 2 components, CF(1) - the catalytic core - and CF(0) - the membrane proton channel. CF(1) has five subunits: alpha(3), beta(3), gamma(1), delta(1), epsilon(1). CF(0) has three main subunits: a, b and c.

It localises to the mitochondrion. Its subcellular location is the mitochondrion inner membrane. Functionally, mitochondrial membrane ATP synthase (F(1)F(0) ATP synthase or Complex V) produces ATP from ADP in the presence of a proton gradient across the membrane which is generated by electron transport complexes of the respiratory chain. F-type ATPases consist of two structural domains, F(1) - containing the extramembraneous catalytic core, and F(0) - containing the membrane proton channel, linked together by a central stalk and a peripheral stalk. During catalysis, ATP synthesis in the catalytic domain of F(1) is coupled via a rotary mechanism of the central stalk subunits to proton translocation. Subunits alpha and beta form the catalytic core in F(1). Rotation of the central stalk against the surrounding alpha(3)beta(3) subunits leads to hydrolysis of ATP in three separate catalytic sites on the beta subunits. Subunit alpha does not bear the catalytic high-affinity ATP-binding sites. In Helianthus annuus (Common sunflower), this protein is ATP synthase subunit alpha, mitochondrial (ATPA).